We begin with the raw amino-acid sequence, 309 residues long: Dicarboxylate carrier SLC25A8 (309 aa).

The Mitochondrial intermembrane segment spans residues 1-16 (MVGFKATDVPPTATVK). Solcar repeat units follow at residues 11-106 (PTAT…VKQF), 114-203 (ASIG…IKDA), and 212-297 (DDLP…LKRA). The interval 16–63 (KFLGAGTAACIADLITFPLDTAKVRLQIQGESQGPVRATASAQYRGVM) is important for interaction with long-chain fatty acids. Residues 17-40 (FLGAGTAACIADLITFPLDTAKVR) form a helical membrane-spanning segment. Topologically, residues 41 to 77 (LQIQGESQGPVRATASAQYRGVMGTILTMVRTEGPRS) are mitochondrial matrix. The chain crosses the membrane as a helical span at residues 78–103 (LYNGLVAGLQRQMSFASVRIGLYDSV). Residues 104–119 (KQFYTKGSEHASIGSR) lie on the Mitochondrial intermembrane side of the membrane. A helical transmembrane segment spans residues 120-145 (LLAGSTTGALAVAVAQPTDVVKVRFQ). At 146–173 (AQARAGGGRRYQSTVNAYKTIAREEGFR) the chain is on the mitochondrial matrix side. A helical transmembrane segment spans residues 174–199 (GLWKGTSPNVARNAIVNCAELVTYDL). Over 200 to 217 (IKDALLKANLMTDDLPCH) the chain is Mitochondrial intermembrane. Residues 218 to 242 (FTSAFGAGFCTTVIASPVDVVKTRY) traverse the membrane as a helical segment. The Mitochondrial matrix portion of the chain corresponds to 243–268 (MNSALGQYSSAGHCALTMLQKEGPRA). A helical membrane pass occupies residues 269 to 294 (FYKGFMPSFLRLGSWNVVMFVTYEQL). The tract at residues 278–285 (LRLGSWNV) is important for interaction with long-chain fatty acids. The Mitochondrial intermembrane segment spans residues 295-309 (KRALMAACTSREAPF).

It belongs to the mitochondrial carrier (TC 2.A.29) family. In terms of assembly, homotetramer. Adopts an asymmetrical dimer of dimers functional form. In terms of tissue distribution, widely expressed in adult human tissues, including tissues rich in macrophages. Most expressed in white adipose tissue and skeletal muscle.

It is found in the mitochondrion inner membrane. It catalyses the reaction L-aspartate(out) + phosphate(in) + H(+)(in) = L-aspartate(in) + phosphate(out) + H(+)(out). It carries out the reaction oxaloacetate(out) + phosphate(in) + H(+)(in) = oxaloacetate(in) + phosphate(out) + H(+)(out). The enzyme catalyses (S)-malate(out) + phosphate(in) + H(+)(in) = (S)-malate(in) + phosphate(out) + H(+)(out). The catalysed reaction is malonate(out) + phosphate(in) + H(+)(in) = malonate(in) + phosphate(out) + H(+)(out). It catalyses the reaction sulfate(out) + phosphate(in) + H(+)(in) = sulfate(in) + phosphate(out) + H(+)(out). It carries out the reaction (S)-malate(out) = (S)-malate(in). The enzyme catalyses L-aspartate(out) = L-aspartate(in). The catalysed reaction is phosphate(in) = phosphate(out). It catalyses the reaction chloride(in) = chloride(out). It carries out the reaction H(+)(in) = H(+)(out). The enzyme catalyses a long-chain fatty acid(out) = a long-chain fatty acid(in). Inhibited by pyridoxal- 5'-phosphate, bathophenanthroline, tannic acid, bromocresol purple, butylmalonate and phenylsuccinate. Proton conductance is activated by cardiolipin and long-chain free fatty acids and inhibited by purine nucleotides ATP and ADP. Chloride ion transporter activity is inhibited by long-chain free fatty acids. Antiporter that exports dicarboxylate intermediates of the Krebs cycle in exchange for phosphate plus a proton across the inner membrane of mitochondria, a process driven by mitochondrial motive force with an overall impact on glycolysis, glutaminolysis and glutathione-dependent redox balance. Continuous export of oxaloacetate and related four-carbon dicarboxylates from mitochondrial matrix into the cytosol negatively regulates the oxidation of acetyl-CoA substrates via the Krebs cycle, lowering the ATP/ADP ratio and reactive oxygen species (ROS) production. May mediate inducible proton entry into the mitochondrial matrix affecting ATP turnover as a protection mechanism against oxidative stress. The proton currents are most likely associated with fatty acid flipping across the inner membrane of mitochondria in a metabolic process regulated by free fatty acids and purine nucleotides. Regulates the use of glucose as a source of energy. Required for glucose-induced DRP1-dependent mitochondrial fission and neuron activation in the ventromedial nucleus of the hypothalamus (VMH). This mitochondrial adaptation mechanism modulates the VMH pool of glucose-excited neurons with an impact on systemic glucose homeostasis. Regulates ROS levels and metabolic reprogramming of macrophages during the resolution phase of inflammation. Attenuates ROS production in response to IL33 to preserve the integrity of the Krebs cycle required for persistent production of itaconate and subsequent GATA3-dependent differentiation of inflammation-resolving alternatively activated macrophages. Can unidirectionally transport anions including L-malate, L-aspartate, phosphate and chloride ions. Does not mediate adaptive thermogenesis. This is Dicarboxylate carrier SLC25A8 (UCP2) from Homo sapiens (Human).